Here is a 61-residue protein sequence, read N- to C-terminus: DNA-directed RNA polymerase subunit Rpo6 (61 aa).

Belongs to the archaeal Rpo6/eukaryotic RPB6 RNA polymerase subunit family. Part of the RNA polymerase complex.

It is found in the cytoplasm. The catalysed reaction is RNA(n) + a ribonucleoside 5'-triphosphate = RNA(n+1) + diphosphate. Its function is as follows. DNA-dependent RNA polymerase (RNAP) catalyzes the transcription of DNA into RNA using the four ribonucleoside triphosphates as substrates. The protein is DNA-directed RNA polymerase subunit Rpo6 of Methanothermobacter thermautotrophicus (strain ATCC 29096 / DSM 1053 / JCM 10044 / NBRC 100330 / Delta H) (Methanobacterium thermoautotrophicum).